Consider the following 156-residue polypeptide: Large ribosomal subunit protein uL15 (156 aa).

Residues Met1–Thr13 are compositionally biased toward basic and acidic residues. The interval Met1–Arg41 is disordered. The segment covering Arg21–Val35 has biased composition (gly residues).

It belongs to the universal ribosomal protein uL15 family. In terms of assembly, part of the 50S ribosomal subunit.

Its function is as follows. Binds to the 23S rRNA. The polypeptide is Large ribosomal subunit protein uL15 (Sinorhizobium medicae (strain WSM419) (Ensifer medicae)).